Here is a 797-residue protein sequence, read N- to C-terminus: LPS-assembly protein LptD (797 aa).

Positions 1–20 (MHTIRCLILSALSVAGAAQA) are cleaved as a signal peptide. Residues 23–45 (SQDAAPAGRQPVGSVASPGLEMP) form a disordered region.

Belongs to the LptD family. In terms of assembly, component of the lipopolysaccharide transport and assembly complex. Interacts with LptE and LptA.

It localises to the cell outer membrane. In terms of biological role, together with LptE, is involved in the assembly of lipopolysaccharide (LPS) at the surface of the outer membrane. The chain is LPS-assembly protein LptD from Bordetella avium (strain 197N).